The sequence spans 424 residues: Piriformospora indica-insensitive protein 2 (424 aa).

Residues 1–21 (MLWQTFFSSLLLLSLLFGCNG) form the signal peptide. LRR repeat units follow at residues 141–166 (ASNL…IGNL), 167–190 (TKLK…ICNL), 191–213 (KRLK…CFKG), 214–237 (LKEL…SFGD), 238–263 (LVSL…GFLK), 265–286 (LTLL…IENI), 287–311 (QSLT…NWGK), 312–336 (MSNL…LTNL), 337–360 (KRLR…KLEA), and 362–387 (PCLG…FYEK).

Its subcellular location is the cell membrane. Functionally, required for growth promotion and enhanced seed production mediated by the endophytic fungus Piriformospora indica. The polypeptide is Piriformospora indica-insensitive protein 2 (PII-2) (Arabidopsis thaliana (Mouse-ear cress)).